The primary structure comprises 227 residues: ATP phosphoribosyltransferase (227 aa).

This sequence belongs to the ATP phosphoribosyltransferase family. Short subfamily. In terms of assembly, heteromultimer composed of HisG and HisZ subunits.

It is found in the cytoplasm. The enzyme catalyses 1-(5-phospho-beta-D-ribosyl)-ATP + diphosphate = 5-phospho-alpha-D-ribose 1-diphosphate + ATP. It participates in amino-acid biosynthesis; L-histidine biosynthesis; L-histidine from 5-phospho-alpha-D-ribose 1-diphosphate: step 1/9. Its function is as follows. Catalyzes the condensation of ATP and 5-phosphoribose 1-diphosphate to form N'-(5'-phosphoribosyl)-ATP (PR-ATP). Has a crucial role in the pathway because the rate of histidine biosynthesis seems to be controlled primarily by regulation of HisG enzymatic activity. This Nitrosospira multiformis (strain ATCC 25196 / NCIMB 11849 / C 71) protein is ATP phosphoribosyltransferase.